The primary structure comprises 1355 residues: Phosphoribosylformylglycinamidine synthase (1355 aa).

ATP is bound by residues 326-337 (GAETGTGGRLRD) and 406-408 (IGF). Positions 743, 747, and 911 each coordinate Mg(2+). Residue Ser-913 coordinates ATP. The Glutamine amidotransferase type-1 domain maps to 1087–1325 (KVAVIREEGS…LSWQWPFMPE (239 aa)). Catalysis depends on Cys-1182, which acts as the Nucleophile. Residues His-1310 and Glu-1312 contribute to the active site.

It in the N-terminal section; belongs to the FGAMS family.

The protein resides in the cytoplasm. It carries out the reaction N(2)-formyl-N(1)-(5-phospho-beta-D-ribosyl)glycinamide + L-glutamine + ATP + H2O = 2-formamido-N(1)-(5-O-phospho-beta-D-ribosyl)acetamidine + L-glutamate + ADP + phosphate + H(+). It participates in purine metabolism; IMP biosynthesis via de novo pathway; 5-amino-1-(5-phospho-D-ribosyl)imidazole from N(2)-formyl-N(1)-(5-phospho-D-ribosyl)glycinamide: step 1/2. Its function is as follows. Phosphoribosylformylglycinamidine synthase involved in the purines biosynthetic pathway. Catalyzes the ATP-dependent conversion of formylglycinamide ribonucleotide (FGAR) and glutamine to yield formylglycinamidine ribonucleotide (FGAM) and glutamate. The sequence is that of Phosphoribosylformylglycinamidine synthase (purL) from Dictyostelium discoideum (Social amoeba).